Here is a 362-residue protein sequence, read N- to C-terminus: Aminomethyltransferase (362 aa).

This sequence belongs to the GcvT family. As to quaternary structure, the glycine cleavage system is composed of four proteins: P, T, L and H.

The catalysed reaction is N(6)-[(R)-S(8)-aminomethyldihydrolipoyl]-L-lysyl-[protein] + (6S)-5,6,7,8-tetrahydrofolate = N(6)-[(R)-dihydrolipoyl]-L-lysyl-[protein] + (6R)-5,10-methylene-5,6,7,8-tetrahydrofolate + NH4(+). The glycine cleavage system catalyzes the degradation of glycine. In Listeria monocytogenes serotype 4a (strain HCC23), this protein is Aminomethyltransferase.